The following is a 236-amino-acid chain: Probable pseudouridine-5'-phosphatase YKL033W-A (236 aa).

It belongs to the HAD-like hydrolase superfamily.

It carries out the reaction XMP + H2O = xanthosine + phosphate. It catalyses the reaction psi-UMP + H2O = pseudouridine + phosphate. Its function is as follows. Nucleotidase with XMP as the best in vitro substrate. Low catalytic efficiencies of YKL033W-A observed with XMP and other substrates suggest that these could be secondary activities for this protein, and its primary substrate is not yet identified. May possess pseudouridine 5'-phosphatase activity and together with dTTP/UTP pyrophosphatase YOR111W might constitute a pathway for the detoxification of pseudouridine 5'-triphosphate (Psi-UTP) and -monophosphate (Psi-UMP). This chain is Probable pseudouridine-5'-phosphatase YKL033W-A, found in Saccharomyces cerevisiae (strain ATCC 204508 / S288c) (Baker's yeast).